Consider the following 155-residue polypeptide: Small ribosomal subunit protein uS7c (155 aa).

The protein belongs to the universal ribosomal protein uS7 family. Part of the 30S ribosomal subunit.

The protein localises to the plastid. Its subcellular location is the chloroplast. One of the primary rRNA binding proteins, it binds directly to 16S rRNA where it nucleates assembly of the head domain of the 30S subunit. This Beta vulgaris (Sugar beet) protein is Small ribosomal subunit protein uS7c.